Here is a 324-residue protein sequence, read N- to C-terminus: Beta-ketoacyl-[acyl-carrier-protein] synthase III (324 aa).

Residues cysteine 113 and histidine 251 contribute to the active site. The segment at 252–256 is ACP-binding; sequence QANKR. The active site involves asparagine 281.

This sequence belongs to the thiolase-like superfamily. FabH family. In terms of assembly, homodimer.

It is found in the cytoplasm. It catalyses the reaction malonyl-[ACP] + acetyl-CoA + H(+) = 3-oxobutanoyl-[ACP] + CO2 + CoA. Its pathway is lipid metabolism; fatty acid biosynthesis. Its function is as follows. Catalyzes the condensation reaction of fatty acid synthesis by the addition to an acyl acceptor of two carbons from malonyl-ACP. Catalyzes the first condensation reaction which initiates fatty acid synthesis and may therefore play a role in governing the total rate of fatty acid production. Possesses both acetoacetyl-ACP synthase and acetyl transacylase activities. Its substrate specificity determines the biosynthesis of branched-chain and/or straight-chain of fatty acids. The protein is Beta-ketoacyl-[acyl-carrier-protein] synthase III of Bartonella bacilliformis (strain ATCC 35685 / KC583 / Herrer 020/F12,63).